Reading from the N-terminus, the 410-residue chain is Protein translocase subunit SecY (410 aa).

The next 9 helical transmembrane spans lie at 61 to 81 (LSVFALGIIPYINATITIQIL), 106 to 126 (ITKYLSFCFAFIESLAIVLRL), 135 to 155 (LYFIVQTTLILISGAMLVMWL), 170 to 190 (VIIFVNIASAFAKFLLNQLFV), 195 to 215 (FLDFASYFALIVFSIACIVFV), 248 to 268 (QGGVMPIILASSLLALVDYVI), 289 to 309 (ILFLLLYSAFIIFFNYLYCSL), 349 to 369 (LFGSGFLAFIVLAPNFLEFVF), and 373 to 393 (VFKGLAVSSLLIVVGVAIDLI).

It belongs to the SecY/SEC61-alpha family. In terms of assembly, component of the plastid Sec protein translocase complex, which is composed of at least SecY and SecE.

The protein localises to the plastid. Its subcellular location is the chloroplast thylakoid membrane. Its function is as follows. The central subunit of the protein translocation channel SecYE. Consists of two halves formed by TMs 1-5 and 6-10. These two domains form a lateral gate at the front which open onto the bilayer between TMs 2 and 7, and are clamped together by SecE at the back. The channel is closed by both a pore ring composed of hydrophobic SecY resides and a short helix (helix 2A) on the extracellular side of the membrane which forms a plug. The protein is Protein translocase subunit SecY of Cyanidium caldarium (Red alga).